Consider the following 407-residue polypeptide: 1-deoxy-D-xylulose 5-phosphate reductoisomerase (407 aa).

The NADPH site is built by Thr-25, Gly-26, Ser-27, Ile-28, Asn-53, and Asn-136. 1-deoxy-D-xylulose 5-phosphate is bound at residue Lys-137. Position 138 (Glu-138) interacts with NADPH. Asp-162 contributes to the Mn(2+) binding site. 4 residues coordinate 1-deoxy-D-xylulose 5-phosphate: Ser-163, Glu-164, Ser-188, and His-211. Glu-164 contacts Mn(2+). An NADPH-binding site is contributed by Gly-217. Residues Ser-224, Asn-229, Lys-230, and Glu-233 each coordinate 1-deoxy-D-xylulose 5-phosphate. Glu-233 lines the Mn(2+) pocket.

This sequence belongs to the DXR family. The cofactor is Mg(2+). Mn(2+) serves as cofactor.

It carries out the reaction 2-C-methyl-D-erythritol 4-phosphate + NADP(+) = 1-deoxy-D-xylulose 5-phosphate + NADPH + H(+). It functions in the pathway isoprenoid biosynthesis; isopentenyl diphosphate biosynthesis via DXP pathway; isopentenyl diphosphate from 1-deoxy-D-xylulose 5-phosphate: step 1/6. Catalyzes the NADPH-dependent rearrangement and reduction of 1-deoxy-D-xylulose-5-phosphate (DXP) to 2-C-methyl-D-erythritol 4-phosphate (MEP). The chain is 1-deoxy-D-xylulose 5-phosphate reductoisomerase from Rhodopseudomonas palustris (strain HaA2).